The sequence spans 180 residues: Large ribosomal subunit protein uL6 (180 aa).

Belongs to the universal ribosomal protein uL6 family. As to quaternary structure, part of the 50S ribosomal subunit.

In terms of biological role, this protein binds to the 23S rRNA, and is important in its secondary structure. It is located near the subunit interface in the base of the L7/L12 stalk, and near the tRNA binding site of the peptidyltransferase center. The chain is Large ribosomal subunit protein uL6 from Mycoplasma capricolum subsp. capricolum (strain California kid / ATCC 27343 / NCTC 10154).